A 917-amino-acid chain; its full sequence is Interleukin-6 receptor subunit beta (917 aa).

An N-terminal signal peptide occupies residues 1–22; the sequence is MSAPRIWLAQALLFFLTTESIG. Residues 23–617 are Extracellular-facing; it reads QLLEPCGYIY…TPKFAQGEIE (595 aa). The Ig-like C2-type domain maps to 26-120; that stretch reads EPCGYIYPEF…IEQNVYGVTM (95 aa). Disulfide bonds link C28–C54 and C48–C103. 4 N-linked (GlcNAc...) asparagine glycosylation sites follow: N43, N61, N83, and N131. Fibronectin type-III domains follow at residues 128-221, 222-322, 327-417, 422-515, and 517-611; these read KPTN…VKPT, PPYN…TYED, PPSF…IPSP, AYSV…LKQA, and PARG…TPKF. The cysteines at positions 134 and 144 are disulfide-linked. The N-linked (GlcNAc...) asparagine glycan is linked to N157. A disulfide bridge links C172 with C180. The N-linked (GlcNAc...) asparagine glycan is linked to N225. The short motif at 308–312 is the WSXWS motif element; it reads WSDWS. The N-linked (GlcNAc...) asparagine glycan is linked to N388. An intrachain disulfide couples C456 to C464. N476 and N551 each carry an N-linked (GlcNAc...) asparagine glycan. The chain crosses the membrane as a helical span at residues 618–639; it reads AIVVPVCLAFLLTTLLGVLFCF. The Cytoplasmic segment spans residues 640–917; the sequence is NKRDLIKKHI…TVRQGGYMPQ (278 aa). Residues 649-657 carry the Box 1 motif motif; it reads IWPNVPDPS. Disordered regions lie at residues 658-678 and 719-754; these read KSHI…NSKD and TEGH…TAST. 2 positions are modified to phosphoserine: S659 and S665. The segment covering 729–753 has biased composition (low complexity); the sequence is SSCMSSSRPSISSNEENESAQSTAS. Phosphoserine is present on residues S780, S787, S827, and S837. The segment at 898-917 is disordered; it reads EEIPKSYLPQTVRQGGYMPQ.

Belongs to the type I cytokine receptor family. Type 2 subfamily. As to quaternary structure, component of a hexamer of two molecules each of IL6, IL6R and IL6ST; associates with the complex IL6:IL6R but does not interact with IL6. Forms heterodimers composed of LIFR and IL6ST (type I OSM receptor) which are activated by LIF and OSM. Also forms heterodimers composed of OSMR and IL6ST (type II receptor) which are activated by OSM but not by LIF. Interacts with HCK. Interacts with INPP5D/SHIP1. Interacts with SRC and YES. Interacts with ARMH4; this interaction prevents IL6ST protein homodimerization and bridges ARMH4 with IL6R and STAT3 and therefore inhibits phosphorylation of STAT3 at 'Tyr-705'. In terms of processing, phosphorylation of Ser-780 down-regulates cell surface expression. Post-translationally, heavily N-glycosylated. Glycosylation is required for protein stability and localization in plasma membrane but not for ligand binding. As to expression, expression not restricted to IL6-responsive cells. Found in tissues such as brain, heart, thymus, spleen, kidney, lung and liver. Found in all the cell lines tested except BaF-B03. Expressed paraventricular nucleus of the hypothalamus.

It localises to the cell membrane. Functionally, signal-transducing molecule. The receptor systems for IL6, LIF, OSM, CNTF, IL11, CTF1 and BSF3 can utilize IL6ST for initiating signal transmission. Binding of IL6 to IL6R induces IL6ST homodimerization and formation of a high-affinity receptor complex, which activates the intracellular JAK-MAPK and JAK-STAT3 signaling pathways. That causes phosphorylation of IL6ST tyrosine residues which in turn activates STAT3. In parallel, the IL6 signaling pathway induces the expression of two cytokine receptor signaling inhibitors, SOCS1 and SOCS3, which inhibit JAK and terminate the activity of the IL6 signaling pathway as a negative feedback loop. Also activates the yes-associated protein 1 (YAP) and NOTCH pathways to control inflammation-induced epithelial regeneration, independently of STAT3. Mediates signals which regulate immune response, hematopoiesis, pain control and bone metabolism. Has a role in embryonic development. Essential for survival of motor and sensory neurons and for differentiation of astrocytes. Required for expression of TRPA1 in nociceptive neurons. Required for the maintenance of PTH1R expression in the osteoblast lineage and for the stimulation of PTH-induced osteoblast differentiation. Required for normal trabecular bone mass and cortical bone composition. In Mus musculus (Mouse), this protein is Interleukin-6 receptor subunit beta.